The chain runs to 458 residues: Adenylosuccinate synthetase (458 aa).

GTP contacts are provided by residues 17 to 23 (GDEGKGK) and 45 to 47 (GHT). Asp-18 serves as the catalytic Proton acceptor. Residues Asp-18 and Gly-45 each coordinate Mg(2+). IMP-binding positions include 18-21 (DEGK), 43-46 (NAGH), Thr-137, Arg-151, Gln-247, Thr-262, and Arg-330. Catalysis depends on His-46, which acts as the Proton donor. 326-332 (VTTGRSR) is a binding site for substrate. Residues Arg-332, 358-360 (KLD), and 440-442 (STS) each bind GTP.

It belongs to the adenylosuccinate synthetase family. In terms of assembly, homodimer. It depends on Mg(2+) as a cofactor.

Its subcellular location is the cytoplasm. It carries out the reaction IMP + L-aspartate + GTP = N(6)-(1,2-dicarboxyethyl)-AMP + GDP + phosphate + 2 H(+). The protein operates within purine metabolism; AMP biosynthesis via de novo pathway; AMP from IMP: step 1/2. In terms of biological role, plays an important role in the de novo pathway of purine nucleotide biosynthesis. Catalyzes the first committed step in the biosynthesis of AMP from IMP. This chain is Adenylosuccinate synthetase, found in Delftia acidovorans (strain DSM 14801 / SPH-1).